The following is a 185-amino-acid chain: Dual-action ribosomal maturation protein DarP (185 aa).

The protein belongs to the DarP family.

It is found in the cytoplasm. In terms of biological role, member of a network of 50S ribosomal subunit biogenesis factors which assembles along the 30S-50S interface, preventing incorrect 23S rRNA structures from forming. Promotes peptidyl transferase center (PTC) maturation. The protein is Dual-action ribosomal maturation protein DarP of Vibrio vulnificus (strain YJ016).